The chain runs to 395 residues: Acid ceramidase (395 aa).

Residues 1–21 form the signal peptide; that stretch reads MLGRSRLALVLLAAAVSCAVA. A disulfide bridge links Cys-31 with Cys-340. The active-site Nucleophile is the Cys-143. N-linked (GlcNAc...) asparagine glycosylation is found at Asn-173, Asn-195, Asn-259, Asn-286, Asn-342, and Asn-348. An intrachain disulfide couples Cys-388 to Cys-392.

The protein belongs to the acid ceramidase family. Heterodimer; disulfide-linked. The heterodimer is composed of the disulfide-linked alpha and beta chains produced by autocatalytic cleavage of the precursor. In terms of processing, N-glycosylated. Post-translationally, proteolytically cleaved into two chains alpha and beta that remain associated via a disulfide bond. Cleavage gives rise to a conformation change that activates the enzyme. The same catalytic Cys residue mediates the autoproteolytic cleavage and subsequent hydrolysis of lipid substrates. The beta chain may undergo an additional C-terminal processing.

The protein localises to the lysosome. It is found in the secreted. The catalysed reaction is an N-acylsphing-4-enine + H2O = sphing-4-enine + a fatty acid. It catalyses the reaction N-dodecanoylsphing-4-enine + H2O = dodecanoate + sphing-4-enine. It carries out the reaction N-tetradecanoylsphing-4-enine + H2O = tetradecanoate + sphing-4-enine. The enzyme catalyses N-hexadecanoylsphing-4-enine + H2O = sphing-4-enine + hexadecanoate. The catalysed reaction is N-octadecanoylsphing-4-enine + H2O = sphing-4-enine + octadecanoate. It catalyses the reaction N-dodecanoyl-(4R)-hydroxysphinganine + H2O = (4R)-hydroxysphinganine + dodecanoate. It carries out the reaction N-(dodecanoyl)-sphinganine + H2O = dodecanoate + sphinganine. The enzyme catalyses N-(acetyl)-sphing-4-enine + H2O = sphing-4-enine + acetate. The catalysed reaction is N-(hexanoyl)sphing-4-enine + H2O = hexanoate + sphing-4-enine. It catalyses the reaction N-octanoylsphing-4-enine + H2O = octanoate + sphing-4-enine. It carries out the reaction N-(9Z-octadecenoyl)-sphing-4-enine + H2O = sphing-4-enine + (9Z)-octadecenoate. The enzyme catalyses N-dodecanoylethanolamine + H2O = dodecanoate + ethanolamine. Its pathway is lipid metabolism; sphingolipid metabolism. Its function is as follows. Lysosomal ceramidase that hydrolyzes sphingolipid ceramides into sphingosine and free fatty acids at acidic pH. Ceramides, sphingosine, and its phosphorylated form sphingosine-1-phosphate are bioactive lipids that mediate cellular signaling pathways regulating several biological processes including cell proliferation, apoptosis and differentiation. Has a higher catalytic efficiency towards C12-ceramides versus other ceramides. Also catalyzes the reverse reaction allowing the synthesis of ceramides from fatty acids and sphingosine. For the reverse synthetic reaction, the natural sphingosine D-erythro isomer is more efficiently utilized as a substrate compared to D-erythro-dihydrosphingosine and D-erythro-phytosphingosine, while the fatty acids with chain lengths of 12 or 14 carbons are the most efficiently used. Also has an N-acylethanolamine hydrolase activity. By regulating the levels of ceramides, sphingosine and sphingosine-1-phosphate in the epidermis, mediates the calcium-induced differentiation of epidermal keratinocytes. Also indirectly regulates tumor necrosis factor/TNF-induced apoptosis. By regulating the intracellular balance between ceramides and sphingosine, in adrenocortical cells, probably also acts as a regulator of steroidogenesis. This chain is Acid ceramidase, found in Macaca fascicularis (Crab-eating macaque).